We begin with the raw amino-acid sequence, 623 residues long: GATA zinc finger domain-containing protein 6 (623 aa).

Disordered stretches follow at residues 137–156 (IISP…GNNF), 167–197 (INNN…TAST), and 245–289 (PTTT…TAST). Over residues 167-179 (INNNSNNNNNNNN) the composition is skewed to low complexity. Residues 185-197 (KQQTSKGSATAST) show a composition bias toward polar residues. The segment at 320–345 (CHSCGETQTSQWRRGPDGCKSLCNAC) adopts a GATA-type zinc-finger fold. Residues 398 to 509 (IQQQQQKDDH…SINHNDKLIN (112 aa)) are disordered. Residues 410–482 (LSRPSSFSSQ…TSPTISSESL (73 aa)) are compositionally biased toward low complexity. Residues 483-502 (NFSSATNTPTNLSPNLQSIN) are compositionally biased toward polar residues.

This is GATA zinc finger domain-containing protein 6 (gtaF) from Dictyostelium discoideum (Social amoeba).